We begin with the raw amino-acid sequence, 149 residues long: Transcriptional repressor NrdR (149 aa).

A zinc finger lies at 3–34; sequence CPFCSATDTKVIDSRLVADGHQVRRRRECVQC. Residues 49–139 form the ATP-cone domain; it reads PRVVKQDGSR…VYRAFEDVSE (91 aa).

This sequence belongs to the NrdR family. Zn(2+) is required as a cofactor.

Its function is as follows. Negatively regulates transcription of bacterial ribonucleotide reductase nrd genes and operons by binding to NrdR-boxes. This chain is Transcriptional repressor NrdR, found in Shewanella halifaxensis (strain HAW-EB4).